Reading from the N-terminus, the 159-residue chain is Phosphopantetheine adenylyltransferase (159 aa).

A substrate-binding site is contributed by T10. Residues T10–F11 and H18 contribute to the ATP site. Substrate contacts are provided by K42, M74, and R88. ATP-binding positions include G89–R91, E99, and W124–S130.

Belongs to the bacterial CoaD family. In terms of assembly, homohexamer. Mg(2+) serves as cofactor.

Its subcellular location is the cytoplasm. It catalyses the reaction (R)-4'-phosphopantetheine + ATP + H(+) = 3'-dephospho-CoA + diphosphate. The protein operates within cofactor biosynthesis; coenzyme A biosynthesis; CoA from (R)-pantothenate: step 4/5. Functionally, reversibly transfers an adenylyl group from ATP to 4'-phosphopantetheine, yielding dephospho-CoA (dPCoA) and pyrophosphate. The sequence is that of Phosphopantetheine adenylyltransferase from Salmonella dublin (strain CT_02021853).